Consider the following 421-residue polypeptide: ATP-dependent RNA helicase RhlB (421 aa).

The short motif at 9–37 (QKFSDFALHPKVVEALEKKGFHNCTPIQA) is the Q motif element. The Helicase ATP-binding domain occupies 40–219 (LPLTLAGRDV…FEQMNNAEYI (180 aa)). Position 53–60 (53–60 (AQTGTGKT)) interacts with ATP. The short motif at 165 to 168 (DEAD) is the DEAD box element. Residues 245–390 (RLLQTLIEEE…VSKYNPDALM (146 aa)) enclose the Helicase C-terminal domain. The segment at 392-421 (DLPKPLRLTRPRTGNGPRRTGTPRNRRRSG) is disordered. The segment covering 402-414 (PRTGNGPRRTGTP) has biased composition (low complexity).

It belongs to the DEAD box helicase family. RhlB subfamily. Component of the RNA degradosome, which is a multiprotein complex involved in RNA processing and mRNA degradation.

Its subcellular location is the cytoplasm. The enzyme catalyses ATP + H2O = ADP + phosphate + H(+). DEAD-box RNA helicase involved in RNA degradation. Has RNA-dependent ATPase activity and unwinds double-stranded RNA. The polypeptide is ATP-dependent RNA helicase RhlB (Escherichia coli O17:K52:H18 (strain UMN026 / ExPEC)).